A 279-amino-acid polypeptide reads, in one-letter code: Acetyl-coenzyme A carboxylase carboxyl transferase subunit beta (279 aa).

Residues 23–279 (LWSKCDECGA…LIKLFKHLRG (257 aa)) form the CoA carboxyltransferase N-terminal domain. Positions 27, 30, 46, and 49 each coordinate Zn(2+). Residues 27–49 (CDECGAALHKKQLEDHLYTCPEC) form a C4-type zinc finger.

Belongs to the AccD/PCCB family. Acetyl-CoA carboxylase is a heterohexamer composed of biotin carboxyl carrier protein (AccB), biotin carboxylase (AccC) and two subunits each of ACCase subunit alpha (AccA) and ACCase subunit beta (AccD). It depends on Zn(2+) as a cofactor.

The protein localises to the cytoplasm. It catalyses the reaction N(6)-carboxybiotinyl-L-lysyl-[protein] + acetyl-CoA = N(6)-biotinyl-L-lysyl-[protein] + malonyl-CoA. The protein operates within lipid metabolism; malonyl-CoA biosynthesis; malonyl-CoA from acetyl-CoA: step 1/1. Its function is as follows. Component of the acetyl coenzyme A carboxylase (ACC) complex. Biotin carboxylase (BC) catalyzes the carboxylation of biotin on its carrier protein (BCCP) and then the CO(2) group is transferred by the transcarboxylase to acetyl-CoA to form malonyl-CoA. The chain is Acetyl-coenzyme A carboxylase carboxyl transferase subunit beta from Chlorobaculum parvum (strain DSM 263 / NCIMB 8327) (Chlorobium vibrioforme subsp. thiosulfatophilum).